A 1713-amino-acid polypeptide reads, in one-letter code: Serine/threonine-protein kinase MRCK beta (1713 aa).

One can recognise a Protein kinase domain in the interval phenylalanine 76–phenylalanine 342. ATP is bound by residues isoleucine 82–valine 90 and lysine 105. The active-site Proton acceptor is aspartate 200. Phosphoserine; by autocatalysis occurs at positions 221 and 233. At threonine 239 the chain carries Phosphothreonine; by autocatalysis. Residues glutamate 343 to glycine 413 enclose the AGC-kinase C-terminal domain. Phosphothreonine is present on threonine 423. Residues leucine 434–histidine 649 adopt a coiled-coil conformation. The residue at position 671 (arginine 671) is an Omega-N-methylarginine. Coiled-coil stretches lie at residues glutamine 681 to glutamate 815 and glutamate 878 to aspartate 939. Serine 927 carries the phosphoserine modification. Tyrosine 954 bears the Phosphotyrosine mark. The segment covering alanine 971–glutamate 994 has biased composition (polar residues). Residues alanine 971–proline 1022 form a disordered region. Residues alanine 1026–cysteine 1076 form a Phorbol-ester/DAG-type zinc finger. The PH domain occupies glycine 1096–alanine 1215. Residues isoleucine 1241–asparagine 1515 form the CNH domain. The CRIB domain occupies isoleucine 1585–glycine 1598. The disordered stretch occupies residues threonine 1616 to alanine 1713. The segment covering aspartate 1666–lysine 1677 has biased composition (basic and acidic residues). Serine 1682, serine 1684, serine 1688, serine 1692, and serine 1695 each carry phosphoserine.

Belongs to the protein kinase superfamily. AGC Ser/Thr protein kinase family. DMPK subfamily. In terms of assembly, homodimer and homotetramer via the coiled coil regions. Interacts tightly with GTP-bound but not GDP-bound CDC42. Interacts with TJP1; this interaction requires the presence of catalytically active CDC42. Forms a tripartite complex with MYO18A and LURAP1 with the latter acting as an adapter connecting CDC42BPB and MYO18A. LURAP1 binding results in activation of CDC42BPB by abolition of its negative autoregulation. Interacts with STRIP1, STRN3 and SIKE1. Interacts with CPNE4 (via VWFA domain). Interacts with LURAP1. Interacts (via AGC-kinase C-terminal domain) with FAM89B/LRAP25 (via LRR repeat). Forms a tripartite complex with FAM89B/LRAP25 and LIMK1. Mg(2+) serves as cofactor. Post-translationally, proteolytically cleaved by caspases upon apoptosis induction.

The protein localises to the cytoplasm. Its subcellular location is the cell membrane. It is found in the cell junction. The protein resides in the cell projection. It localises to the lamellipodium. The enzyme catalyses L-seryl-[protein] + ATP = O-phospho-L-seryl-[protein] + ADP + H(+). The catalysed reaction is L-threonyl-[protein] + ATP = O-phospho-L-threonyl-[protein] + ADP + H(+). With respect to regulation, maintained in an inactive, closed conformation by an interaction between the kinase domain and the negative autoregulatory C-terminal coiled-coil region. Agonist binding to the phorbol ester binding site disrupts this, releasing the kinase domain to allow N-terminus-mediated dimerization and kinase activation by transautophosphorylation. Inhibited by chelerythrine chloride. Functionally, serine/threonine-protein kinase which is an important downstream effector of CDC42 and plays a role in the regulation of cytoskeleton reorganization and cell migration. Regulates actin cytoskeletal reorganization via phosphorylation of PPP1R12C and MYL9/MLC2. In concert with MYO18A and LURAP1, is involved in modulating lamellar actomyosin retrograde flow that is crucial to cell protrusion and migration. Phosphorylates PPP1R12A. In concert with FAM89B/LRAP25 mediates the targeting of LIMK1 to the lamellipodium resulting in its activation and subsequent phosphorylation of CFL1 which is important for lamellipodial F-actin regulation. In Mus musculus (Mouse), this protein is Serine/threonine-protein kinase MRCK beta.